The primary structure comprises 156 residues: ATP synthase subunit b (156 aa).

The helical transmembrane segment at 7-27 threads the bilayer; that stretch reads LFAQMVVFLILAWFTMKFVWP.

The protein belongs to the ATPase B chain family. F-type ATPases have 2 components, F(1) - the catalytic core - and F(0) - the membrane proton channel. F(1) has five subunits: alpha(3), beta(3), gamma(1), delta(1), epsilon(1). F(0) has three main subunits: a(1), b(2) and c(10-14). The alpha and beta chains form an alternating ring which encloses part of the gamma chain. F(1) is attached to F(0) by a central stalk formed by the gamma and epsilon chains, while a peripheral stalk is formed by the delta and b chains.

The protein resides in the cell inner membrane. In terms of biological role, f(1)F(0) ATP synthase produces ATP from ADP in the presence of a proton or sodium gradient. F-type ATPases consist of two structural domains, F(1) containing the extramembraneous catalytic core and F(0) containing the membrane proton channel, linked together by a central stalk and a peripheral stalk. During catalysis, ATP synthesis in the catalytic domain of F(1) is coupled via a rotary mechanism of the central stalk subunits to proton translocation. Functionally, component of the F(0) channel, it forms part of the peripheral stalk, linking F(1) to F(0). This is ATP synthase subunit b from Paraburkholderia phymatum (strain DSM 17167 / CIP 108236 / LMG 21445 / STM815) (Burkholderia phymatum).